Reading from the N-terminus, the 182-residue chain is MSKQLNPAVPDQPIVLGKMGSTYGIRGWLRVFSSTENAESIFDYQPWFIQQAGKWQHVELEDWKRHSQDLIIKVKGVDDREAANLLTNCEIIVDSTQLPALEEDDYYWKDLMGCQVVTTTGYELGKIIDMMETGSNDVMVVKANLKDAFGMKERLVPFLHGQVIKKVDLTAQRVEVDWDPGF.

The 80-residue stretch at 103–182 (EDDYYWKDLM…RVEVDWDPGF (80 aa)) folds into the PRC barrel domain.

It belongs to the RimM family. As to quaternary structure, binds ribosomal protein uS19.

The protein localises to the cytoplasm. Its function is as follows. An accessory protein needed during the final step in the assembly of 30S ribosomal subunit, possibly for assembly of the head region. Essential for efficient processing of 16S rRNA. May be needed both before and after RbfA during the maturation of 16S rRNA. It has affinity for free ribosomal 30S subunits but not for 70S ribosomes. The chain is Ribosome maturation factor RimM from Yersinia pestis bv. Antiqua (strain Antiqua).